Consider the following 118-residue polypeptide: Large ribosomal subunit protein uL23c (118 aa).

The protein belongs to the universal ribosomal protein uL23 family. Part of the 50S ribosomal subunit.

It localises to the plastid. It is found in the chloroplast. Its function is as follows. Binds to 23S rRNA. This Stigeoclonium helveticum (Green alga) protein is Large ribosomal subunit protein uL23c (rpl23).